A 63-amino-acid chain; its full sequence is Beta-defensin 38 (63 aa).

Positions 1-21 (MKISCFLLLILSLYFFQINQA) are cleaved as a signal peptide. Cystine bridges form between Cys-29/Cys-58, Cys-36/Cys-51, and Cys-41/Cys-59.

It belongs to the beta-defensin family. Only expressed in epididymis (caput, corpus and cauda).

It is found in the secreted. Its function is as follows. Synthetic Defb38 kills both Gram-negative (E.coli and P.aeruginosa) and Gram-positive (E.faecium) bacteria. In Mus musculus (Mouse), this protein is Beta-defensin 38 (Defb38).